A 302-amino-acid polypeptide reads, in one-letter code: tRNA pseudouridine synthase B (302 aa).

The active-site Nucleophile is Asp-45.

Belongs to the pseudouridine synthase TruB family. Type 1 subfamily.

The catalysed reaction is uridine(55) in tRNA = pseudouridine(55) in tRNA. Its function is as follows. Responsible for synthesis of pseudouridine from uracil-55 in the psi GC loop of transfer RNAs. The protein is tRNA pseudouridine synthase B of Francisella tularensis subsp. tularensis (strain FSC 198).